Reading from the N-terminus, the 355-residue chain is 3-dehydroquinate synthase (355 aa).

NAD(+) is bound by residues 71–76, 105–109, 129–130, K142, and K151; these read EGEERK, GVVGD, and TS. The Zn(2+) site is built by E184, H246, and H263.

It belongs to the sugar phosphate cyclases superfamily. Dehydroquinate synthase family. Requires NAD(+) as cofactor. The cofactor is Co(2+). Zn(2+) is required as a cofactor.

It localises to the cytoplasm. The enzyme catalyses 7-phospho-2-dehydro-3-deoxy-D-arabino-heptonate = 3-dehydroquinate + phosphate. It participates in metabolic intermediate biosynthesis; chorismate biosynthesis; chorismate from D-erythrose 4-phosphate and phosphoenolpyruvate: step 2/7. In terms of biological role, catalyzes the conversion of 3-deoxy-D-arabino-heptulosonate 7-phosphate (DAHP) to dehydroquinate (DHQ). This Streptococcus pneumoniae (strain ATCC BAA-255 / R6) protein is 3-dehydroquinate synthase.